Here is an 814-residue protein sequence, read N- to C-terminus: ATP-dependent 6-phosphofructokinase 1 (814 aa).

The segment at 1–420 is N-terminal catalytic PFK domain 1; sequence MDADASTITP…NLETYKLLTK (420 aa). ATP-binding positions include G55, 118-119, and 148-151; these read RS and GDGS. D149 contacts Mg(2+). Residues 194-196, R231, 238-240, E294, R322, and 328-331 contribute to the substrate site; these read SID, MGR, and HVQR. The active-site Proton acceptor is the D196. The interval 421-435 is interdomain linker; the sequence is MRTVEKDNLSEGHKF. Residues 436 to 814 are C-terminal regulatory PFK domain 2; it reads NVAVINVGAP…EEESADSHMF (379 aa). Beta-D-fructose 2,6-bisphosphate-binding positions include K505, 563–567, R601, 608–610, E664, R690, 696–699, and R771; these read TISNN, MGG, and HVQQ.

This sequence belongs to the phosphofructokinase type A (PFKA) family. ATP-dependent PFK group I subfamily. Eukaryotic two domain clade 'E' sub-subfamily. Homotetramer. Mg(2+) serves as cofactor.

It is found in the cytoplasm. It carries out the reaction beta-D-fructose 6-phosphate + ATP = beta-D-fructose 1,6-bisphosphate + ADP + H(+). The protein operates within carbohydrate degradation; glycolysis; D-glyceraldehyde 3-phosphate and glycerone phosphate from D-glucose: step 3/4. Allosterically activated by ADP, AMP, or fructose 2,6-bisphosphate, and allosterically inhibited by ATP or citrate. In terms of biological role, catalyzes the phosphorylation of D-fructose 6-phosphate to fructose 1,6-bisphosphate by ATP, the first committing step of glycolysis. This Caenorhabditis elegans protein is ATP-dependent 6-phosphofructokinase 1.